The primary structure comprises 349 residues: uncharacterized protein (349 aa).

The chain crosses the membrane as a helical span at residues 221–241 (AFVVWIGSGLNIIWWTGIVLL). A compositionally biased stretch (pro residues) spans 328–339 (VASAPPAVPSQP). Positions 328 to 349 (VASAPPAVPSQPPEYSSVFPPV) are disordered.

It is found in the host membrane. This is an uncharacterized protein from Human cytomegalovirus (strain Merlin) (HHV-5).